The following is a 1073-amino-acid chain: Probable inorganic carbon transporter subunit DabA (1073 aa).

The Zn(2+) site is built by cysteine 551, aspartate 553, histidine 742, and cysteine 757.

This sequence belongs to the inorganic carbon transporter (TC 9.A.2) DabA family. In terms of assembly, forms a complex with DabB. Requires Zn(2+) as cofactor.

Its subcellular location is the cell inner membrane. Its function is as follows. Part of an energy-coupled inorganic carbon pump. The chain is Probable inorganic carbon transporter subunit DabA from Methylococcus capsulatus (strain ATCC 33009 / NCIMB 11132 / Bath).